The chain runs to 294 residues: MYNAEKKQPTYWQRLKIAFQYVMPQLYLTLAAGWLAKQKWGSVTHFIIKLFAKKYHVNMQEAEKTEFKDYASFNEFFIRPLKSEARKIDENPTALCLPADGRISQCGHIEQQTLLQAKGHSFSLVDLLAGDTELAKEFEHGEFATIYLSPRDYHRVHMPCDATLRKMIYVPGDLFSVNPFLNEHIPNLLARNERVICVFDTEFGTMVQILVGATITASMSTVWAGIINPPRSTEVKEWTYSDESAVQLRKGQEMGAFQLGSTVINLFQADKVELANHLDVGVPVRVGEVLAYKK.

Catalysis depends on charge relay system; for autoendoproteolytic cleavage activity residues aspartate 100, histidine 157, and serine 261. Serine 261 serves as the catalytic Schiff-base intermediate with substrate; via pyruvic acid; for decarboxylase activity. Pyruvic acid (Ser); by autocatalysis is present on serine 261.

The protein belongs to the phosphatidylserine decarboxylase family. PSD-B subfamily. Prokaryotic type I sub-subfamily. Heterodimer of a large membrane-associated beta subunit and a small pyruvoyl-containing alpha subunit. Pyruvate serves as cofactor. Post-translationally, is synthesized initially as an inactive proenzyme. Formation of the active enzyme involves a self-maturation process in which the active site pyruvoyl group is generated from an internal serine residue via an autocatalytic post-translational modification. Two non-identical subunits are generated from the proenzyme in this reaction, and the pyruvate is formed at the N-terminus of the alpha chain, which is derived from the carboxyl end of the proenzyme. The autoendoproteolytic cleavage occurs by a canonical serine protease mechanism, in which the side chain hydroxyl group of the serine supplies its oxygen atom to form the C-terminus of the beta chain, while the remainder of the serine residue undergoes an oxidative deamination to produce ammonia and the pyruvoyl prosthetic group on the alpha chain. During this reaction, the Ser that is part of the protease active site of the proenzyme becomes the pyruvoyl prosthetic group, which constitutes an essential element of the active site of the mature decarboxylase.

Its subcellular location is the cell membrane. The catalysed reaction is a 1,2-diacyl-sn-glycero-3-phospho-L-serine + H(+) = a 1,2-diacyl-sn-glycero-3-phosphoethanolamine + CO2. Its pathway is phospholipid metabolism; phosphatidylethanolamine biosynthesis; phosphatidylethanolamine from CDP-diacylglycerol: step 2/2. Functionally, catalyzes the formation of phosphatidylethanolamine (PtdEtn) from phosphatidylserine (PtdSer). This chain is Phosphatidylserine decarboxylase proenzyme, found in Histophilus somni (strain 2336) (Haemophilus somnus).